A 226-amino-acid chain; its full sequence is Phosphoribosylformylglycinamidine synthase subunit PurQ (226 aa).

The Glutamine amidotransferase type-1 domain maps to 4–226 (RIGVVTFPGS…TSILKKLVNA (223 aa)). Cysteine 87 (nucleophile) is an active-site residue. Active-site residues include histidine 196 and glutamate 198.

In terms of assembly, part of the FGAM synthase complex composed of 1 PurL, 1 PurQ and 2 PurS subunits.

It is found in the cytoplasm. It carries out the reaction N(2)-formyl-N(1)-(5-phospho-beta-D-ribosyl)glycinamide + L-glutamine + ATP + H2O = 2-formamido-N(1)-(5-O-phospho-beta-D-ribosyl)acetamidine + L-glutamate + ADP + phosphate + H(+). The catalysed reaction is L-glutamine + H2O = L-glutamate + NH4(+). It participates in purine metabolism; IMP biosynthesis via de novo pathway; 5-amino-1-(5-phospho-D-ribosyl)imidazole from N(2)-formyl-N(1)-(5-phospho-D-ribosyl)glycinamide: step 1/2. Part of the phosphoribosylformylglycinamidine synthase complex involved in the purines biosynthetic pathway. Catalyzes the ATP-dependent conversion of formylglycinamide ribonucleotide (FGAR) and glutamine to yield formylglycinamidine ribonucleotide (FGAM) and glutamate. The FGAM synthase complex is composed of three subunits. PurQ produces an ammonia molecule by converting glutamine to glutamate. PurL transfers the ammonia molecule to FGAR to form FGAM in an ATP-dependent manner. PurS interacts with PurQ and PurL and is thought to assist in the transfer of the ammonia molecule from PurQ to PurL. This chain is Phosphoribosylformylglycinamidine synthase subunit PurQ, found in Streptomyces coelicolor (strain ATCC BAA-471 / A3(2) / M145).